We begin with the raw amino-acid sequence, 450 residues long: Glucose-6-phosphate isomerase (450 aa).

Glu289 functions as the Proton donor in the catalytic mechanism. Active-site residues include His310 and Lys424.

This sequence belongs to the GPI family.

The protein localises to the cytoplasm. The enzyme catalyses alpha-D-glucose 6-phosphate = beta-D-fructose 6-phosphate. It participates in carbohydrate biosynthesis; gluconeogenesis. The protein operates within carbohydrate degradation; glycolysis; D-glyceraldehyde 3-phosphate and glycerone phosphate from D-glucose: step 2/4. Functionally, catalyzes the reversible isomerization of glucose-6-phosphate to fructose-6-phosphate. In Leptospira biflexa serovar Patoc (strain Patoc 1 / Ames), this protein is Glucose-6-phosphate isomerase.